The primary structure comprises 572 residues: AAA ATPase forming ring-shaped complexes (572 aa).

The tract at residues 1–22 (MTEPRHESGSAAPQRPATDPVQ) is disordered. Residues 21 to 67 (VQRQVNLLRDQKRNLDKQAAALASQNEKLVRLLNASRQEIVGLKKTL) are a coiled coil. 270–275 (GNGKTL) serves as a coordination point for ATP. A compositionally biased stretch (acidic residues) spans 527-539 (HEQQDLPDTEDSE). The segment at 527 to 572 (HEQQDLPDTEDSEDWARLTGRRGDTIDSVHMASHRPQGEPGPGATP) is disordered.

It belongs to the AAA ATPase family. In terms of assembly, homohexamer. Assembles into a hexameric ring structure.

This is AAA ATPase forming ring-shaped complexes from Kocuria rhizophila (strain ATCC 9341 / DSM 348 / NBRC 103217 / DC2201).